An 89-amino-acid polypeptide reads, in one-letter code: Small ribosomal subunit protein uS15 (89 aa).

The protein belongs to the universal ribosomal protein uS15 family. As to quaternary structure, part of the 30S ribosomal subunit. Forms a bridge to the 50S subunit in the 70S ribosome, contacting the 23S rRNA.

Its function is as follows. One of the primary rRNA binding proteins, it binds directly to 16S rRNA where it helps nucleate assembly of the platform of the 30S subunit by binding and bridging several RNA helices of the 16S rRNA. In terms of biological role, forms an intersubunit bridge (bridge B4) with the 23S rRNA of the 50S subunit in the ribosome. This Streptococcus agalactiae serotype Ia (strain ATCC 27591 / A909 / CDC SS700) protein is Small ribosomal subunit protein uS15.